A 199-amino-acid chain; its full sequence is 7-methyl-GTP pyrophosphatase (199 aa).

Asp-74 serves as the catalytic Proton acceptor.

This sequence belongs to the Maf family. YceF subfamily. It depends on a divalent metal cation as a cofactor.

It is found in the cytoplasm. It carries out the reaction N(7)-methyl-GTP + H2O = N(7)-methyl-GMP + diphosphate + H(+). Nucleoside triphosphate pyrophosphatase that hydrolyzes 7-methyl-GTP (m(7)GTP). May have a dual role in cell division arrest and in preventing the incorporation of modified nucleotides into cellular nucleic acids. The chain is 7-methyl-GTP pyrophosphatase from Albidiferax ferrireducens (strain ATCC BAA-621 / DSM 15236 / T118) (Rhodoferax ferrireducens).